The chain runs to 112 residues: MAHCSTTAPFVDAMPASPQVTPAESEVVEVDEANDRPWVTVVWDDPVNLMHYVTYIFQKLFGYSKARATELMMQVHSEGKAVVSSGSRDKVENDVRKLHAAGLWATMQRDSS.

The protein belongs to the ClpS family. Binds to the N-terminal domain of the chaperone ClpA.

Its function is as follows. Involved in the modulation of the specificity of the ClpAP-mediated ATP-dependent protein degradation. The polypeptide is ATP-dependent Clp protease adapter protein ClpS (Rhodococcus opacus (strain B4)).